The primary structure comprises 475 residues: CAAX prenyl protease 1 homolog (475 aa).

Over Met1–Arg18 the chain is Lumenal. A helical transmembrane segment spans residues Ile19–Gln39. Topologically, residues Arg40 to Ser81 are nuclear. The chain crosses the membrane as a helical span at residues Gly82 to Trp102. Over Arg103–Ser123 the chain is Lumenal. Residues Leu124 to Tyr144 form a helical membrane-spanning segment. Residues Asn145–Lys170 lie on the Nuclear side of the membrane. A helical membrane pass occupies residues Phe171–Ile191. Residues Gly192–Tyr195 are Lumenal-facing. The helical transmembrane segment at Phe196 to Ala216 threads the bilayer. Residues Asp217–Lys347 are Nuclear-facing. The disordered stretch occupies residues Asp293–Lys314. The span at Met300–Lys314 shows a compositional bias: basic and acidic residues. His335 provides a ligand contact to Zn(2+). Glu336 is an active-site residue. His339 serves as a coordination point for Zn(2+). Residues Asn348–Gly368 traverse the membrane as a helical segment. At Arg369–Gln382 the chain is on the lumenal side. The helical transmembrane segment at Pro383–Phe405 threads the bilayer. The Nuclear segment spans residues Cys406–Asp475. Glu415 contributes to the Zn(2+) binding site.

It belongs to the peptidase M48A family. It depends on Zn(2+) as a cofactor.

The protein localises to the endoplasmic reticulum membrane. Its subcellular location is the nucleus inner membrane. It localises to the early endosome membrane. The protein resides in the late endosome membrane. The enzyme catalyses Hydrolyzes the peptide bond -P2-(S-farnesyl or geranylgeranyl)C-P1'-P2'-P3'-COOH where P1' and P2' are amino acids with aliphatic side chains and P3' is any C-terminal residue.. Its activity is regulated as follows. Inhibited by HIV protease inhibitors, such as lopinavir, tipranavir and nelfinavir, leading to defects in lamin A/LMNA maturation and accumulation of prelamin-A/C precursors in cells. This causes defects in nuclear envelope integrity and release of DNA in the cytosol, activating the AIM2 inflammasome. Functionally, transmembrane metalloprotease whose catalytic activity is critical for processing lamin A/LMNA on the inner nuclear membrane and clearing clogged translocons on the endoplasmic reticulum. Proteolytically removes the C-terminal three residues of farnesylated proteins. Also plays an antiviral role independently of its protease activity by restricting enveloped RNA and DNA viruses. Mechanistically, controls IFITM antiviral pathway to hinder viruses from breaching the endosomal barrier by modulating membrane fluidity. In Mus musculus (Mouse), this protein is CAAX prenyl protease 1 homolog.